Consider the following 339-residue polypeptide: NADH-quinone oxidoreductase subunit H (339 aa).

Helical transmembrane passes span 9–29, 50–70, 82–102, 115–135, 161–181, 187–207, 235–255, 275–295, and 311–331; these read IFPL…LILC, PNVV…KLLF, ILFI…WAVI, VGVL…IIAG, MGLV…SEII, IPWW…ISVL, MGFA…SAMT, IPGF…FLWI, and GWKV…SVLV.

Belongs to the complex I subunit 1 family. NDH-1 is composed of 14 different subunits. Subunits NuoA, H, J, K, L, M, N constitute the membrane sector of the complex.

It is found in the cell inner membrane. The catalysed reaction is a quinone + NADH + 5 H(+)(in) = a quinol + NAD(+) + 4 H(+)(out). Functionally, NDH-1 shuttles electrons from NADH, via FMN and iron-sulfur (Fe-S) centers, to quinones in the respiratory chain. The immediate electron acceptor for the enzyme in this species is believed to be ubiquinone. Couples the redox reaction to proton translocation (for every two electrons transferred, four hydrogen ions are translocated across the cytoplasmic membrane), and thus conserves the redox energy in a proton gradient. This subunit may bind ubiquinone. This chain is NADH-quinone oxidoreductase subunit H, found in Rickettsia rickettsii (strain Iowa).